Consider the following 387-residue polypeptide: 4-hydroxy-3-methylbut-2-en-1-yl diphosphate synthase (flavodoxin) (387 aa).

Residues Cys-280, Cys-283, Cys-315, and Glu-322 each contribute to the [4Fe-4S] cluster site.

The protein belongs to the IspG family. [4Fe-4S] cluster is required as a cofactor.

It carries out the reaction (2E)-4-hydroxy-3-methylbut-2-enyl diphosphate + oxidized [flavodoxin] + H2O + 2 H(+) = 2-C-methyl-D-erythritol 2,4-cyclic diphosphate + reduced [flavodoxin]. It participates in isoprenoid biosynthesis; isopentenyl diphosphate biosynthesis via DXP pathway; isopentenyl diphosphate from 1-deoxy-D-xylulose 5-phosphate: step 5/6. Its function is as follows. Converts 2C-methyl-D-erythritol 2,4-cyclodiphosphate (ME-2,4cPP) into 1-hydroxy-2-methyl-2-(E)-butenyl 4-diphosphate. This chain is 4-hydroxy-3-methylbut-2-en-1-yl diphosphate synthase (flavodoxin), found in Mycobacterium bovis (strain ATCC BAA-935 / AF2122/97).